Reading from the N-terminus, the 720-residue chain is Phosphoribosylformylglycinamidine synthase subunit PurL (720 aa).

Residue His-47 is part of the active site. ATP contacts are provided by Tyr-50 and Lys-89. Position 91 (Glu-91) interacts with Mg(2+). Residues 92–95 and Arg-114 each bind substrate; that span reads SHNH. The active-site Proton acceptor is His-93. Asp-115 provides a ligand contact to Mg(2+). Gln-238 provides a ligand contact to substrate. Asp-266 lines the Mg(2+) pocket. Position 310–312 (310–312) interacts with substrate; the sequence is ESQ. Residues Asp-488 and Gly-525 each contribute to the ATP site. A Mg(2+)-binding site is contributed by Asn-526. Residue Ser-528 participates in substrate binding.

It belongs to the FGAMS family. As to quaternary structure, monomer. Part of the FGAM synthase complex composed of 1 PurL, 1 PurQ and 2 PurS subunits.

It is found in the cytoplasm. It catalyses the reaction N(2)-formyl-N(1)-(5-phospho-beta-D-ribosyl)glycinamide + L-glutamine + ATP + H2O = 2-formamido-N(1)-(5-O-phospho-beta-D-ribosyl)acetamidine + L-glutamate + ADP + phosphate + H(+). Its pathway is purine metabolism; IMP biosynthesis via de novo pathway; 5-amino-1-(5-phospho-D-ribosyl)imidazole from N(2)-formyl-N(1)-(5-phospho-D-ribosyl)glycinamide: step 1/2. Its function is as follows. Part of the phosphoribosylformylglycinamidine synthase complex involved in the purines biosynthetic pathway. Catalyzes the ATP-dependent conversion of formylglycinamide ribonucleotide (FGAR) and glutamine to yield formylglycinamidine ribonucleotide (FGAM) and glutamate. The FGAM synthase complex is composed of three subunits. PurQ produces an ammonia molecule by converting glutamine to glutamate. PurL transfers the ammonia molecule to FGAR to form FGAM in an ATP-dependent manner. PurS interacts with PurQ and PurL and is thought to assist in the transfer of the ammonia molecule from PurQ to PurL. This chain is Phosphoribosylformylglycinamidine synthase subunit PurL, found in Cereibacter sphaeroides (strain ATCC 17023 / DSM 158 / JCM 6121 / CCUG 31486 / LMG 2827 / NBRC 12203 / NCIMB 8253 / ATH 2.4.1.) (Rhodobacter sphaeroides).